Reading from the N-terminus, the 186-residue chain is NADH-quinone oxidoreductase subunit I (186 aa).

4Fe-4S ferredoxin-type domains follow at residues L70–A100 and D113–D142. [4Fe-4S] cluster-binding residues include C80, C83, C86, C90, C122, C125, C128, and C132.

The protein belongs to the complex I 23 kDa subunit family. NDH-1 is composed of 14 different subunits. Subunits NuoA, H, J, K, L, M, N constitute the membrane sector of the complex. [4Fe-4S] cluster is required as a cofactor.

It is found in the cell inner membrane. It catalyses the reaction a quinone + NADH + 5 H(+)(in) = a quinol + NAD(+) + 4 H(+)(out). Functionally, NDH-1 shuttles electrons from NADH, via FMN and iron-sulfur (Fe-S) centers, to quinones in the respiratory chain. The immediate electron acceptor for the enzyme in this species is believed to be ubiquinone. Couples the redox reaction to proton translocation (for every two electrons transferred, four hydrogen ions are translocated across the cytoplasmic membrane), and thus conserves the redox energy in a proton gradient. The protein is NADH-quinone oxidoreductase subunit I of Pelobacter propionicus (strain DSM 2379 / NBRC 103807 / OttBd1).